Reading from the N-terminus, the 440-residue chain is DNA polymerase delta small subunit (440 aa).

The protein belongs to the DNA polymerase delta/II small subunit family. In terms of assembly, heterodimer with subunits of 125 kDa and 50 kDa.

The protein resides in the nucleus. The enzyme catalyses DNA(n) + a 2'-deoxyribonucleoside 5'-triphosphate = DNA(n+1) + diphosphate. Functionally, the function of the small subunit is not yet clear. The chain is DNA polymerase delta small subunit (POLD2) from Arabidopsis thaliana (Mouse-ear cress).